The following is an 809-amino-acid chain: Quinate/shikimate dehydrogenase (quinone) (809 aa).

5 helical membrane-spanning segments follow: residues Val14 to Gly34, Gly41 to Phe61, Val68 to Phe88, Phe90 to Thr110, and Ala127 to Ile147.

It belongs to the bacterial PQQ dehydrogenase family. Requires pyrroloquinoline quinone as cofactor.

The protein resides in the cell membrane. The enzyme catalyses L-quinate + a quinone = 3-dehydroquinate + a quinol. It catalyses the reaction shikimate + a quinone = 3-dehydroshikimate + a quinol. The protein operates within aromatic compound metabolism; 3,4-dihydroxybenzoate biosynthesis; 3-dehydroquinate from D-quinate (PQQ route): step 1/1. Its function is as follows. Can act either on quinate or on shikimate. The protein is Quinate/shikimate dehydrogenase (quinone) (quiA) of Acinetobacter baylyi (strain ATCC 33305 / BD413 / ADP1).